The chain runs to 109 residues: Protein FAM32A-like (109 aa).

The interval 1-48 is disordered; it reads MSEYKSVQKGSLKLKGVSLPSKKKKKKNKEMKRLEEQVLTSENEEGTK. Residues 9–20 are compositionally biased toward low complexity; the sequence is KGSLKLKGVSLP. Basic residues predominate over residues 21–30; it reads SKKKKKKNKE.

This sequence belongs to the FAM32 family.

The protein resides in the nucleus. May induce G2 arrest and apoptosis. May also increase cell sensitivity to apoptotic stimuli. This Danio rerio (Zebrafish) protein is Protein FAM32A-like (fam32al).